A 152-amino-acid polypeptide reads, in one-letter code: Anaerobic nitrite reductase SYMA (152 aa).

The 150-residue stretch at 2–151 (ALTERQEALL…LVATIKAEMK (150 aa)) folds into the Globin domain. The Homodimerization motif lies at 35 to 39 (EAAPE). Residues Ser45, Lys59, His63, Arg93, and His98 each contribute to the heme b site. Positions 105 to 117 (DPHFEVMKGALLG) match the Homodimerization motif.

It belongs to the plant globin family. In terms of assembly, homodimer. It depends on heme b as a cofactor. Root nodules.

The protein localises to the cytoplasm. It is found in the nucleus. It catalyses the reaction Fe(III)-heme b-[protein] + nitric oxide + H2O = Fe(II)-heme b-[protein] + nitrite + 2 H(+). Functionally, phytoglobin that reduces nitrite to nitric oxide (NO) under anoxic conditions (e.g. during flooding or in waterlogged soil) and upon root nodulation. Required for general plant development and during nodulation, especially for the onset of symbiosis. Monitors nitric oxide (NO) levels during early phase of the nitrogen-fixing symbiosis and buffers oxygen in functioning nodules. May not function as an oxygen storage or transport protein. Has an unusually high affinity for O(2) through a hexacoordinate heme iron because of a very low dissociation constant. The sequence is that of Anaerobic nitrite reductase SYMA from Casuarina glauca (Swamp oak).